Reading from the N-terminus, the 452-residue chain is uncharacterized protein (452 aa).

The next 14 membrane-spanning stretches (helical) occupy residues A8 to I28, F39 to V59, F77 to F97, L100 to I122, L134 to I156, W161 to F183, L203 to F222, P226 to W243, A266 to P286, L302 to I322, P330 to I350, L359 to M379, G393 to G415, and M425 to L447.

Belongs to the major facilitator superfamily.

It is found in the cell membrane. This is an uncharacterized protein from Bacillus subtilis (strain 168).